The following is a 170-amino-acid chain: Protein-lysine myristoyltransferase HlyC (170 aa).

Active-site residues include His-23 and Asp-92. A heme-binding site is contributed by His-151.

Belongs to the RTX toxin acyltransferase family. As to quaternary structure, monomer. Post-translationally, proteolytically cleaved by the protease systems ClpAP, ClpXP and FtsH, leading to its degradation.

The protein localises to the cytoplasm. It carries out the reaction tetradecanoyl-[ACP] + L-lysyl-[protein] = N(6)-tetradecanoyl-L-lysyl-[protein] + holo-[ACP] + H(+). The acyltransferase activity is inhibited by heme. Protein-lysine myristoyltransferase that catalyzes myristoylation of the protoxin (HlyA) at two internal lysine residues, thereby converting it to the active toxin. In Escherichia coli, this protein is Protein-lysine myristoyltransferase HlyC.